A 295-amino-acid polypeptide reads, in one-letter code: Acetylglutamate kinase (295 aa).

Residues 64–65 (GG), R86, and N190 contribute to the substrate site.

It belongs to the acetylglutamate kinase family. ArgB subfamily.

It localises to the cytoplasm. The catalysed reaction is N-acetyl-L-glutamate + ATP = N-acetyl-L-glutamyl 5-phosphate + ADP. Its pathway is amino-acid biosynthesis; L-arginine biosynthesis; N(2)-acetyl-L-ornithine from L-glutamate: step 2/4. Catalyzes the ATP-dependent phosphorylation of N-acetyl-L-glutamate. The polypeptide is Acetylglutamate kinase (Oleidesulfovibrio alaskensis (strain ATCC BAA-1058 / DSM 17464 / G20) (Desulfovibrio alaskensis)).